Here is a 520-residue protein sequence, read N- to C-terminus: GMP synthase [glutamine-hydrolyzing] (520 aa).

The Glutamine amidotransferase type-1 domain occupies 13 to 205 (KIIVLDYGSQ…ALNICKAKGD (193 aa)). Catalysis depends on cysteine 90, which acts as the Nucleophile. Residues histidine 179 and glutamate 181 contribute to the active site. Residues 206 to 395 (WSMDNFIDMQ…LGMPDHIVWR (190 aa)) form the GMPS ATP-PPase domain. An ATP-binding site is contributed by 233-239 (SGGVDSS).

Homodimer.

It carries out the reaction XMP + L-glutamine + ATP + H2O = GMP + L-glutamate + AMP + diphosphate + 2 H(+). It participates in purine metabolism; GMP biosynthesis; GMP from XMP (L-Gln route): step 1/1. In terms of biological role, catalyzes the synthesis of GMP from XMP. The polypeptide is GMP synthase [glutamine-hydrolyzing] (Streptococcus pneumoniae serotype 2 (strain D39 / NCTC 7466)).